The following is a 478-amino-acid chain: BTB/POZ domain-containing protein 17 (478 aa).

An N-terminal signal peptide occupies residues 1–28 (MLRKGSCKPGSWGSFWAILALVGLVTRA). Asn-61, Asn-100, Asn-195, and Asn-307 each carry an N-linked (GlcNAc...) asparagine glycan. The BTB domain occupies 63 to 132 (SDVILRVQAV…LYCGELTVLL (70 aa)). Positions 169 to 269 (AVGWYHYAVS…IPPAQLFQLQ (101 aa)) constitute a BACK domain.

The protein localises to the secreted. The sequence is that of BTB/POZ domain-containing protein 17 (Btbd17) from Mus musculus (Mouse).